The primary structure comprises 474 residues: tRNA-2-methylthio-N(6)-dimethylallyladenosine synthase (474 aa).

Positions 3 to 120 (KKLHIKTWGC…LPEMINSVRG (118 aa)) constitute an MTTase N-terminal domain. Residues cysteine 12, cysteine 49, cysteine 83, cysteine 157, cysteine 161, and cysteine 164 each coordinate [4Fe-4S] cluster. One can recognise a Radical SAM core domain in the interval 143–375 (RAEGPTAFVS…QERINQQAMA (233 aa)). Positions 378–441 (RRMLGTVQRI…TNSLRGKIVR (64 aa)) constitute a TRAM domain.

Belongs to the methylthiotransferase family. MiaB subfamily. Monomer. [4Fe-4S] cluster is required as a cofactor.

It localises to the cytoplasm. The catalysed reaction is N(6)-dimethylallyladenosine(37) in tRNA + (sulfur carrier)-SH + AH2 + 2 S-adenosyl-L-methionine = 2-methylsulfanyl-N(6)-dimethylallyladenosine(37) in tRNA + (sulfur carrier)-H + 5'-deoxyadenosine + L-methionine + A + S-adenosyl-L-homocysteine + 2 H(+). Its function is as follows. Catalyzes the methylthiolation of N6-(dimethylallyl)adenosine (i(6)A), leading to the formation of 2-methylthio-N6-(dimethylallyl)adenosine (ms(2)i(6)A) at position 37 in tRNAs that read codons beginning with uridine. The sequence is that of tRNA-2-methylthio-N(6)-dimethylallyladenosine synthase from Klebsiella pneumoniae subsp. pneumoniae (strain ATCC 700721 / MGH 78578).